A 700-amino-acid chain; its full sequence is Elongation factor G (700 aa).

A tr-type G domain is found at 8–290 (ERYRNIGISA…AVVEYLPAPT (283 aa)). Residues 17–24 (AHIDAGKT), 88–92 (DTPGH), and 142–145 (NKMD) each bind GTP.

This sequence belongs to the TRAFAC class translation factor GTPase superfamily. Classic translation factor GTPase family. EF-G/EF-2 subfamily.

It is found in the cytoplasm. Functionally, catalyzes the GTP-dependent ribosomal translocation step during translation elongation. During this step, the ribosome changes from the pre-translocational (PRE) to the post-translocational (POST) state as the newly formed A-site-bound peptidyl-tRNA and P-site-bound deacylated tRNA move to the P and E sites, respectively. Catalyzes the coordinated movement of the two tRNA molecules, the mRNA and conformational changes in the ribosome. The protein is Elongation factor G of Haemophilus influenzae (strain 86-028NP).